A 562-amino-acid chain; its full sequence is Arginine--tRNA ligase (562 aa).

Positions alanine 129–histidine 139 match the 'HIGH' region motif.

It belongs to the class-I aminoacyl-tRNA synthetase family. As to quaternary structure, monomer.

It localises to the cytoplasm. It catalyses the reaction tRNA(Arg) + L-arginine + ATP = L-arginyl-tRNA(Arg) + AMP + diphosphate. The polypeptide is Arginine--tRNA ligase (Xylella fastidiosa (strain M23)).